The sequence spans 101 residues: Small ribosomal subunit protein uS14 (101 aa).

It belongs to the universal ribosomal protein uS14 family. In terms of assembly, part of the 30S ribosomal subunit. Contacts proteins S3 and S10.

Binds 16S rRNA, required for the assembly of 30S particles and may also be responsible for determining the conformation of the 16S rRNA at the A site. This is Small ribosomal subunit protein uS14 from Ectopseudomonas mendocina (strain ymp) (Pseudomonas mendocina).